A 1212-amino-acid polypeptide reads, in one-letter code: DNA-directed RNA polymerase subunit beta' (1212 aa).

Zn(2+)-binding residues include cysteine 60, cysteine 62, cysteine 75, and cysteine 78. The Mg(2+) site is built by aspartate 450, aspartate 452, and aspartate 454. The Zn(2+) site is built by cysteine 819, cysteine 893, cysteine 900, and cysteine 903.

It belongs to the RNA polymerase beta' chain family. As to quaternary structure, the RNAP catalytic core consists of 2 alpha, 1 beta, 1 beta' and 1 omega subunit. When a sigma factor is associated with the core the holoenzyme is formed, which can initiate transcription. Mg(2+) serves as cofactor. It depends on Zn(2+) as a cofactor.

It catalyses the reaction RNA(n) + a ribonucleoside 5'-triphosphate = RNA(n+1) + diphosphate. In terms of biological role, DNA-dependent RNA polymerase catalyzes the transcription of DNA into RNA using the four ribonucleoside triphosphates as substrates. The chain is DNA-directed RNA polymerase subunit beta' from Streptococcus thermophilus (strain CNRZ 1066).